The following is a 354-amino-acid chain: MEITAQMVKELRESTGAGMMDCKKALGEANGDMEKAVDILREKGLGQAAKKADRLASEGLVSVEVCSKCKKATISEINSETDFVARNPQFQALAKDTTAHIQSSGIKTVEELNTSTLNGVKFEEYFKTQIATIGENLVVRRFETISADDKGVVNGYVHSNGRVGVLIGAACESAEVANKAAEFIRNLCMHAAAMKPSVISYKDLDKDFVEKEFIALRAELEKENEELKRLGKPLHHIPEYASRCQIGEAELAKATKAIEEELKAEGKPEKIWDKIIPGKIERFYADNTVLDQRLTLLGQFYVMDDKKTIEQVIEEKSKELGGKIEIVKYVRFELGEGLEKKVDDFAAEVAAQIG.

The tract at residues 81-84 (TDFV) is involved in Mg(2+) ion dislocation from EF-Tu.

This sequence belongs to the EF-Ts family.

Its subcellular location is the cytoplasm. Associates with the EF-Tu.GDP complex and induces the exchange of GDP to GTP. It remains bound to the aminoacyl-tRNA.EF-Tu.GTP complex up to the GTP hydrolysis stage on the ribosome. The sequence is that of Elongation factor Ts from Campylobacter concisus (strain 13826).